Reading from the N-terminus, the 249-residue chain is UPF0309 protein GTNG_1302 (249 aa).

The region spanning 31 to 214 (VSKAVQNGGI…ALMAENGVEP (184 aa)) is the SIS domain.

It belongs to the UPF0309 family.

The chain is UPF0309 protein GTNG_1302 from Geobacillus thermodenitrificans (strain NG80-2).